A 968-amino-acid polypeptide reads, in one-letter code: Serine/threonine-protein kinase apg-1 (968 aa).

The region spanning 24–329 (FVIDQEIGKG…FEDLFNHPVV (306 aa)) is the Protein kinase domain. Residues 30-38 (IGKGSFAKV) and K53 contribute to the ATP site. D167 serves as the catalytic Proton acceptor. Disordered stretches follow at residues 334-500 (PGLV…ERAA), 528-585 (MYPQ…LGTS), 884-906 (LPKR…LSDE), and 939-968 (ASKA…SVPA). Composition is skewed to basic and acidic residues over residues 350–361 (LKEERPVSRAED), 371–380 (LRKDLADREG), and 417–431 (PRED…KEAA). Composition is skewed to polar residues over residues 441–452 (VQPSTSAPTRPS), 528–538 (MYPQQPQSPKS), and 545–557 (ATQQ…TSGA).

It belongs to the protein kinase superfamily. Ser/Thr protein kinase family. APG1/unc-51/ULK1 subfamily. In terms of assembly, homodimer. Forms a ternary complex with ATG13 and ATG17.

It is found in the cytoplasm. The protein resides in the preautophagosomal structure membrane. The catalysed reaction is L-seryl-[protein] + ATP = O-phospho-L-seryl-[protein] + ADP + H(+). The enzyme catalyses L-threonyl-[protein] + ATP = O-phospho-L-threonyl-[protein] + ADP + H(+). In terms of biological role, serine/threonine protein kinase involved in the cytoplasm to vacuole transport (Cvt) and found to be essential in autophagy, where it is required for the formation of autophagosomes. Involved in the clearance of protein aggregates which cannot be efficiently cleared by the proteasome. Required for selective autophagic degradation of the nucleus (nucleophagy) as well as for mitophagy which contributes to regulate mitochondrial quantity and quality by eliminating the mitochondria to a basal level to fulfill cellular energy requirements and preventing excess ROS production. Also involved in endoplasmic reticulum-specific autophagic process, in selective removal of ER-associated degradation (ERAD) substrates. Plays a key role in ATG9 and ATG23 cycling through the pre-autophagosomal structure and is necessary to promote ATG18 binding to ATG9 through phosphorylation of ATG9. Catalyzes phosphorylation of ATG4, decreasing the interaction between ATG4 and ATG8 and impairing deconjugation of PE-conjugated forms of ATG8. The sequence is that of Serine/threonine-protein kinase apg-1 from Neurospora crassa (strain ATCC 24698 / 74-OR23-1A / CBS 708.71 / DSM 1257 / FGSC 987).